Consider the following 350-residue polypeptide: Holliday junction branch migration complex subunit RuvB (350 aa).

The tract at residues 4–184 (ADRIVTASSR…FGIVQRLEFY (181 aa)) is large ATPase domain (RuvB-L). ATP is bound by residues I23, R24, G65, K68, T69, T70, 131–133 (EDF), R174, Y184, and R221. T69 is a Mg(2+) binding site. The small ATPAse domain (RuvB-S) stretch occupies residues 185–255 (STEDLATIVR…IADLALNMLD (71 aa)). The interval 258–350 (ERGFDHQDRR…TPDLFEGDIV (93 aa)) is head domain (RuvB-H). Residues R294, R313, and R318 each coordinate DNA.

This sequence belongs to the RuvB family. Homohexamer. Forms an RuvA(8)-RuvB(12)-Holliday junction (HJ) complex. HJ DNA is sandwiched between 2 RuvA tetramers; dsDNA enters through RuvA and exits via RuvB. An RuvB hexamer assembles on each DNA strand where it exits the tetramer. Each RuvB hexamer is contacted by two RuvA subunits (via domain III) on 2 adjacent RuvB subunits; this complex drives branch migration. In the full resolvosome a probable DNA-RuvA(4)-RuvB(12)-RuvC(2) complex forms which resolves the HJ.

The protein resides in the cytoplasm. The enzyme catalyses ATP + H2O = ADP + phosphate + H(+). Functionally, the RuvA-RuvB-RuvC complex processes Holliday junction (HJ) DNA during genetic recombination and DNA repair, while the RuvA-RuvB complex plays an important role in the rescue of blocked DNA replication forks via replication fork reversal (RFR). RuvA specifically binds to HJ cruciform DNA, conferring on it an open structure. The RuvB hexamer acts as an ATP-dependent pump, pulling dsDNA into and through the RuvAB complex. RuvB forms 2 homohexamers on either side of HJ DNA bound by 1 or 2 RuvA tetramers; 4 subunits per hexamer contact DNA at a time. Coordinated motions by a converter formed by DNA-disengaged RuvB subunits stimulates ATP hydrolysis and nucleotide exchange. Immobilization of the converter enables RuvB to convert the ATP-contained energy into a lever motion, pulling 2 nucleotides of DNA out of the RuvA tetramer per ATP hydrolyzed, thus driving DNA branch migration. The RuvB motors rotate together with the DNA substrate, which together with the progressing nucleotide cycle form the mechanistic basis for DNA recombination by continuous HJ branch migration. Branch migration allows RuvC to scan DNA until it finds its consensus sequence, where it cleaves and resolves cruciform DNA. This Stutzerimonas stutzeri (strain A1501) (Pseudomonas stutzeri) protein is Holliday junction branch migration complex subunit RuvB.